A 159-amino-acid chain; its full sequence is Ribosomal RNA large subunit methyltransferase H (159 aa).

S-adenosyl-L-methionine is bound by residues L76, G108, and 127 to 132 (FSPMTF).

Belongs to the RNA methyltransferase RlmH family. In terms of assembly, homodimer.

It is found in the cytoplasm. The catalysed reaction is pseudouridine(1915) in 23S rRNA + S-adenosyl-L-methionine = N(3)-methylpseudouridine(1915) in 23S rRNA + S-adenosyl-L-homocysteine + H(+). Functionally, specifically methylates the pseudouridine at position 1915 (m3Psi1915) in 23S rRNA. The chain is Ribosomal RNA large subunit methyltransferase H from Alkaliphilus metalliredigens (strain QYMF).